The following is a 230-amino-acid chain: Fibrillarin-like rRNA/tRNA 2'-O-methyltransferase (230 aa).

S-adenosyl-L-methionine contacts are provided by residues 89-90 (TT), 107-108 (EV), 132-133 (DA), and 152-155 (DISQ).

Belongs to the methyltransferase superfamily. Fibrillarin family. As to quaternary structure, interacts with nop5. Component of box C/D small ribonucleoprotein (sRNP) particles that contain rpl7ae, FlpA and nop5, plus a guide RNA.

Functionally, involved in pre-rRNA and tRNA processing. Utilizes the methyl donor S-adenosyl-L-methionine to catalyze the site-specific 2'-hydroxyl methylation of ribose moieties in rRNA and tRNA. Site specificity is provided by a guide RNA that base pairs with the substrate. Methylation occurs at a characteristic distance from the sequence involved in base pairing with the guide RNA. The protein is Fibrillarin-like rRNA/tRNA 2'-O-methyltransferase of Thermoplasma acidophilum (strain ATCC 25905 / DSM 1728 / JCM 9062 / NBRC 15155 / AMRC-C165).